We begin with the raw amino-acid sequence, 125 residues long: Probable prefoldin subunit 6 (125 aa).

Belongs to the prefoldin subunit beta family. Heterohexamer of two PFD-alpha type and four PFD-beta type subunits.

In terms of biological role, binds specifically to cytosolic chaperonin (c-CPN) and transfers target proteins to it. Binds to nascent polypeptide chain and promotes folding in an environment in which there are many competing pathways for nonnative proteins. This is Probable prefoldin subunit 6 from Drosophila melanogaster (Fruit fly).